The sequence spans 361 residues: Chorismate synthase (361 aa).

The disordered stretch occupies residues 37–59 (TEEDLQHDLDRRRPGTSRYTTPR). Residues 40–49 (DLQHDLDRRR) show a composition bias toward basic and acidic residues. 2 residues coordinate NADP(+): Arg48 and Arg54. FMN is bound by residues 125–127 (RSS), 238–239 (NA), Gly278, 293–297 (KPTSS), and Arg319.

It belongs to the chorismate synthase family. Homotetramer. FMNH2 serves as cofactor.

The enzyme catalyses 5-O-(1-carboxyvinyl)-3-phosphoshikimate = chorismate + phosphate. The protein operates within metabolic intermediate biosynthesis; chorismate biosynthesis; chorismate from D-erythrose 4-phosphate and phosphoenolpyruvate: step 7/7. Its function is as follows. Catalyzes the anti-1,4-elimination of the C-3 phosphate and the C-6 proR hydrogen from 5-enolpyruvylshikimate-3-phosphate (EPSP) to yield chorismate, which is the branch point compound that serves as the starting substrate for the three terminal pathways of aromatic amino acid biosynthesis. This reaction introduces a second double bond into the aromatic ring system. This Erwinia tasmaniensis (strain DSM 17950 / CFBP 7177 / CIP 109463 / NCPPB 4357 / Et1/99) protein is Chorismate synthase.